Reading from the N-terminus, the 292-residue chain is Phosphatidylserine decarboxylase proenzyme (292 aa).

Catalysis depends on charge relay system; for autoendoproteolytic cleavage activity residues D89, H146, and S252. Catalysis depends on S252, which acts as the Schiff-base intermediate with substrate; via pyruvic acid; for decarboxylase activity. S252 carries the post-translational modification Pyruvic acid (Ser); by autocatalysis.

It belongs to the phosphatidylserine decarboxylase family. PSD-B subfamily. Prokaryotic type I sub-subfamily. In terms of assembly, heterodimer of a large membrane-associated beta subunit and a small pyruvoyl-containing alpha subunit. Requires pyruvate as cofactor. Post-translationally, is synthesized initially as an inactive proenzyme. Formation of the active enzyme involves a self-maturation process in which the active site pyruvoyl group is generated from an internal serine residue via an autocatalytic post-translational modification. Two non-identical subunits are generated from the proenzyme in this reaction, and the pyruvate is formed at the N-terminus of the alpha chain, which is derived from the carboxyl end of the proenzyme. The autoendoproteolytic cleavage occurs by a canonical serine protease mechanism, in which the side chain hydroxyl group of the serine supplies its oxygen atom to form the C-terminus of the beta chain, while the remainder of the serine residue undergoes an oxidative deamination to produce ammonia and the pyruvoyl prosthetic group on the alpha chain. During this reaction, the Ser that is part of the protease active site of the proenzyme becomes the pyruvoyl prosthetic group, which constitutes an essential element of the active site of the mature decarboxylase.

Its subcellular location is the cell membrane. It catalyses the reaction a 1,2-diacyl-sn-glycero-3-phospho-L-serine + H(+) = a 1,2-diacyl-sn-glycero-3-phosphoethanolamine + CO2. It participates in phospholipid metabolism; phosphatidylethanolamine biosynthesis; phosphatidylethanolamine from CDP-diacylglycerol: step 2/2. In terms of biological role, catalyzes the formation of phosphatidylethanolamine (PtdEtn) from phosphatidylserine (PtdSer). In Shewanella baltica (strain OS223), this protein is Phosphatidylserine decarboxylase proenzyme.